The following is a 181-amino-acid chain: Peptidyl-tRNA hydrolase (181 aa).

A tRNA-binding site is contributed by Y14. The active-site Proton acceptor is the H19. TRNA contacts are provided by Y62, N64, and N108.

Belongs to the PTH family. In terms of assembly, monomer.

Its subcellular location is the cytoplasm. It catalyses the reaction an N-acyl-L-alpha-aminoacyl-tRNA + H2O = an N-acyl-L-amino acid + a tRNA + H(+). In terms of biological role, hydrolyzes ribosome-free peptidyl-tRNAs (with 1 or more amino acids incorporated), which drop off the ribosome during protein synthesis, or as a result of ribosome stalling. Functionally, catalyzes the release of premature peptidyl moieties from peptidyl-tRNA molecules trapped in stalled 50S ribosomal subunits, and thus maintains levels of free tRNAs and 50S ribosomes. In Campylobacter jejuni subsp. doylei (strain ATCC BAA-1458 / RM4099 / 269.97), this protein is Peptidyl-tRNA hydrolase.